We begin with the raw amino-acid sequence, 1357 residues long: DNA-directed RNA polymerase subunit beta (1357 aa).

The protein belongs to the RNA polymerase beta chain family. As to quaternary structure, the RNAP catalytic core consists of 2 alpha, 1 beta, 1 beta' and 1 omega subunit. When a sigma factor is associated with the core the holoenzyme is formed, which can initiate transcription.

The enzyme catalyses RNA(n) + a ribonucleoside 5'-triphosphate = RNA(n+1) + diphosphate. Functionally, DNA-dependent RNA polymerase catalyzes the transcription of DNA into RNA using the four ribonucleoside triphosphates as substrates. This is DNA-directed RNA polymerase subunit beta from Nitrosomonas europaea (strain ATCC 19718 / CIP 103999 / KCTC 2705 / NBRC 14298).